The sequence spans 384 residues: Galactokinase (384 aa).

Glu-34–Asp-37 lines the substrate pocket. Ser-123–Ser-129 lines the ATP pocket. Residues Ser-129 and Glu-161 each contribute to the Mg(2+) site. The Proton acceptor role is filled by Asp-173. Residue Tyr-222 participates in substrate binding.

Belongs to the GHMP kinase family. GalK subfamily.

It is found in the cytoplasm. The enzyme catalyses alpha-D-galactose + ATP = alpha-D-galactose 1-phosphate + ADP + H(+). It functions in the pathway carbohydrate metabolism; galactose metabolism. Functionally, catalyzes the transfer of the gamma-phosphate of ATP to D-galactose to form alpha-D-galactose-1-phosphate (Gal-1-P). This is Galactokinase from Actinobacillus pleuropneumoniae serotype 3 (strain JL03).